We begin with the raw amino-acid sequence, 116 residues long: Evasin P1180 (116 aa).

Residues Met-1–Leu-25 form the signal peptide. Intrachain disulfides connect Cys-38-Cys-58, Cys-54-Cys-95, Cys-71-Cys-100, and Cys-90-Cys-109. 3 N-linked (GlcNAc...) asparagine glycosylation sites follow: Asn-45, Asn-73, and Asn-104.

It is found in the secreted. Its function is as follows. Salivary chemokine-binding protein which binds to host chemokines CCL2, CCL3, CCL4, CCL8 and CCL18. The polypeptide is Evasin P1180 (Amblyomma triste (Neotropical tick)).